A 464-amino-acid polypeptide reads, in one-letter code: MMARRDPKSWAKRLVRAQTLQKQRRAPVGPRSPPPDEEDPRLKCKNCGAFGHTARSTRCPMKCWKAALVPATLGKKEGKENLKPWKPRAEANPGPLNKDKGEKEERPRQQDPQRNALLHMFSGKPPEKPLPNGKGSTESSEHLRVASGPMPVHTTSKRPRVDPVLADRSATEMSGRGSVLASLSPLRKASLSSSSSLGPKERQTGAAADIPQPAFRHQGPEPLLVVKPTHSSPEGGCREVPQAASKTHGLLQAVRPQAQDKRPAVTSQPCPPAATHSLGLGSNLSFGPGAKRPAQAPIQACLNFPKKPRLGPFQIPESAIQGGELRAPENLQPPPAATELGPSTSPQMGRRTPAQVPSVDRQPPHSTPCLPTAQACTMSHHPAAGHDGAQPLRVLFRRLENGRWSSSLLAAPSFHSPEKPGAFLAQSPHVSEKSEAPCVRVPPSVLYEDLQVSSSSEDSDSDLE.

Disordered stretches follow at residues 1-42 (MMAR…DPRL), 69-387 (VPAT…AGHD), and 410-437 (AAPS…SEAP). Composition is skewed to basic and acidic residues over residues 74-89 (GKKE…KPRA) and 97-111 (NKDK…RQQD). Residues 180-197 (LASLSPLRKASLSSSSSL) are compositionally biased toward low complexity.

This sequence belongs to the FAM90 family.

The chain is Protein FAM90A7 from Homo sapiens (Human).